We begin with the raw amino-acid sequence, 64 residues long: Large ribosomal subunit protein bL35 (64 aa).

The interval 1 to 25 (MPKMKTHRGAAKRLKKTGTGKLKRA) is disordered.

This sequence belongs to the bacterial ribosomal protein bL35 family.

The protein is Large ribosomal subunit protein bL35 of Clostridioides difficile (strain 630) (Peptoclostridium difficile).